Reading from the N-terminus, the 398-residue chain is Histidinol-phosphate aminotransferase (398 aa).

Over residues 1–10 the composition is skewed to polar residues; sequence MTGQRATPQP. The disordered stretch occupies residues 1-30; that stretch reads MTGQRATPQPTLDDLPLRDDLRGKSPYGAP. Lys-234 carries the N6-(pyridoxal phosphate)lysine modification.

Belongs to the class-II pyridoxal-phosphate-dependent aminotransferase family. Histidinol-phosphate aminotransferase subfamily. As to quaternary structure, homodimer. Requires pyridoxal 5'-phosphate as cofactor.

The enzyme catalyses L-histidinol phosphate + 2-oxoglutarate = 3-(imidazol-4-yl)-2-oxopropyl phosphate + L-glutamate. It functions in the pathway amino-acid biosynthesis; L-histidine biosynthesis; L-histidine from 5-phospho-alpha-D-ribose 1-diphosphate: step 7/9. This chain is Histidinol-phosphate aminotransferase, found in Mycobacterium avium (strain 104).